The sequence spans 119 residues: Phosphoribosyl-AMP cyclohydrolase (119 aa).

Residue aspartate 77 participates in Mg(2+) binding. Position 78 (cysteine 78) interacts with Zn(2+). Mg(2+) contacts are provided by aspartate 79 and aspartate 81. 2 residues coordinate Zn(2+): cysteine 94 and cysteine 101.

Belongs to the PRA-CH family. As to quaternary structure, homodimer. Requires Mg(2+) as cofactor. The cofactor is Zn(2+).

It is found in the cytoplasm. The catalysed reaction is 1-(5-phospho-beta-D-ribosyl)-5'-AMP + H2O = 1-(5-phospho-beta-D-ribosyl)-5-[(5-phospho-beta-D-ribosylamino)methylideneamino]imidazole-4-carboxamide. It participates in amino-acid biosynthesis; L-histidine biosynthesis; L-histidine from 5-phospho-alpha-D-ribose 1-diphosphate: step 3/9. Its function is as follows. Catalyzes the hydrolysis of the adenine ring of phosphoribosyl-AMP. The polypeptide is Phosphoribosyl-AMP cyclohydrolase (Cereibacter sphaeroides (strain KD131 / KCTC 12085) (Rhodobacter sphaeroides)).